The primary structure comprises 513 residues: MSDLVRSPARAVMVLGTSSGAGKSWLATALCRWYARQGLKVAPFKAQNMSNNARVVPGLIGADGAQPMGEIGSAQYFQALAARCVPGVMHNPVLLKPEADTRSQVVVLGEVRRDLAEVPWRERSEALWPHARAALQQLMAHNDVVVIEGAGSPAEINLHASDYVNMRTALAAQAACLVITDIDRGGAFAHLYGTHQLLPADERALIRGFVLNRFRGDAALLAPGPEQLQALTGVPTIGVLPMWREHGLPEEDGLYEPGGHTAAPGHAAQRLRIAIVAYPRISNLDEFQPLRNLPGVQLVWARQPADLERADWVILPGSKHSQADLAWLRAQRLDAAIARHAAAGGALLGICGGLQMLGEALIDLHGVEGGFDALGGNGPGLGLLPLVTQFDPHKLLRPTRASFGATHGVWAALAGVAFDGYEIHNGRSIQHPAMASALPALRSTCGDTIGWQNGSVLGVYTHGLFESPAVLQALFGAGCRTLDSVFDGLADFAERHFSLGALAGLLSPKQPPG.

The 201-residue stretch at R270–V470 folds into the GATase cobBQ-type domain. The active-site Nucleophile is C351. H462 is an active-site residue.

The protein belongs to the CobB/CobQ family. CobQ subfamily.

It functions in the pathway cofactor biosynthesis; adenosylcobalamin biosynthesis. Its function is as follows. Catalyzes amidations at positions B, D, E, and G on adenosylcobyrinic A,C-diamide. NH(2) groups are provided by glutamine, and one molecule of ATP is hydrogenolyzed for each amidation. The chain is Cobyric acid synthase from Leptothrix cholodnii (strain ATCC 51168 / LMG 8142 / SP-6) (Leptothrix discophora (strain SP-6)).